A 936-amino-acid polypeptide reads, in one-letter code: Protein NLP2 (936 aa).

The interval Ile-99–Val-130 is disordered. The RWP-RK domain maps to Gln-550 to Ser-635. Disordered stretches follow at residues Pro-666–Leu-697, Cys-753–Glu-782, and Asp-794–Leu-827. Basic and acidic residues predominate over residues Thr-671–Glu-682. Residues Asp-688–Leu-697 show a composition bias toward polar residues. A compositionally biased stretch (low complexity) spans Thr-754–Asn-769. Polar residues predominate over residues Gln-770–Gln-781. Residues Ser-801–Ser-815 are compositionally biased toward low complexity. Residues His-816–Ser-825 are compositionally biased toward polar residues. Residues Ala-834–Leu-916 form the PB1 domain.

Its subcellular location is the nucleus. Functionally, probable transcription factor. This chain is Protein NLP2, found in Oryza sativa subsp. japonica (Rice).